A 154-amino-acid polypeptide reads, in one-letter code: Myoglobin (154 aa).

In terms of domain architecture, Globin spans 2 to 148 (GLSDGEWQLV…FRNDIAAKYK (147 aa)). At S4 the chain carries Phosphoserine. Nitrite is bound at residue H65. H65 contacts O2. T68 is modified (phosphothreonine). H94 contributes to the heme b binding site.

The protein belongs to the globin family. In terms of assembly, monomeric.

Its subcellular location is the cytoplasm. It is found in the sarcoplasm. The enzyme catalyses Fe(III)-heme b-[protein] + nitric oxide + H2O = Fe(II)-heme b-[protein] + nitrite + 2 H(+). It catalyses the reaction H2O2 + AH2 = A + 2 H2O. In terms of biological role, monomeric heme protein which primary function is to store oxygen and facilitate its diffusion within muscle tissues. Reversibly binds oxygen through a pentacoordinated heme iron and enables its timely and efficient release as needed during periods of heightened demand. Depending on the oxidative conditions of tissues and cells, and in addition to its ability to bind oxygen, it also has a nitrite reductase activity whereby it regulates the production of bioactive nitric oxide. Under stress conditions, like hypoxia and anoxia, it also protects cells against reactive oxygen species thanks to its pseudoperoxidase activity. This is Myoglobin (MB) from Sciurus vulgaris (Eurasian red squirrel).